The primary structure comprises 509 residues: tRNA-2-methylthio-N(6)-dimethylallyladenosine synthase (509 aa).

A disordered region spans residues 1-21 (MNEKQKLESGQVHPSDKKSEK). The MTTase N-terminal domain maps to 66–184 (RKFYIRTYGC…LPELLSEAYL (119 aa)). 6 residues coordinate [4Fe-4S] cluster: Cys-75, Cys-111, Cys-145, Cys-221, Cys-225, and Cys-228. Residues 207-437 (RNGKIKGWVN…NALVNEISAK (231 aa)) enclose the Radical SAM core domain. Residues 440–503 (KEYEGKVVEV…TWSLDGEMVG (64 aa)) form the TRAM domain.

This sequence belongs to the methylthiotransferase family. MiaB subfamily. As to quaternary structure, monomer. [4Fe-4S] cluster is required as a cofactor.

Its subcellular location is the cytoplasm. The catalysed reaction is N(6)-dimethylallyladenosine(37) in tRNA + (sulfur carrier)-SH + AH2 + 2 S-adenosyl-L-methionine = 2-methylsulfanyl-N(6)-dimethylallyladenosine(37) in tRNA + (sulfur carrier)-H + 5'-deoxyadenosine + L-methionine + A + S-adenosyl-L-homocysteine + 2 H(+). It catalyses the reaction N(6)-dimethylallyladenosine(37) in tRNA + (sulfur carrier)-SH + AH2 + S-adenosyl-L-methionine = 2-thio-N(6)-dimethylallyladenosine(37) in tRNA + (sulfur carrier)-H + 5'-deoxyadenosine + L-methionine + A + H(+). It carries out the reaction 2-thio-N(6)-dimethylallyladenosine(37) in tRNA + S-adenosyl-L-methionine = 2-methylsulfanyl-N(6)-dimethylallyladenosine(37) in tRNA + S-adenosyl-L-homocysteine + H(+). Its function is as follows. Catalyzes the methylthiolation of N6-(dimethylallyl)adenosine (i(6)A), leading to the formation of 2-methylthio-N6-(dimethylallyl)adenosine (ms(2)i(6)A) at position 37 in tRNAs that read codons beginning with uridine. This chain is tRNA-2-methylthio-N(6)-dimethylallyladenosine synthase, found in Bacillus subtilis (strain 168).